Here is a 226-residue protein sequence, read N- to C-terminus: 2-C-methyl-D-erythritol 4-phosphate cytidylyltransferase (226 aa).

It belongs to the IspD/TarI cytidylyltransferase family. IspD subfamily.

The enzyme catalyses 2-C-methyl-D-erythritol 4-phosphate + CTP + H(+) = 4-CDP-2-C-methyl-D-erythritol + diphosphate. The protein operates within isoprenoid biosynthesis; isopentenyl diphosphate biosynthesis via DXP pathway; isopentenyl diphosphate from 1-deoxy-D-xylulose 5-phosphate: step 2/6. Catalyzes the formation of 4-diphosphocytidyl-2-C-methyl-D-erythritol from CTP and 2-C-methyl-D-erythritol 4-phosphate (MEP). The polypeptide is 2-C-methyl-D-erythritol 4-phosphate cytidylyltransferase (Bacillus cereus (strain ATCC 10987 / NRS 248)).